Consider the following 339-residue polypeptide: Uroporphyrinogen decarboxylase (339 aa).

Substrate contacts are provided by residues 23–27 (RQAGR), aspartate 72, tyrosine 147, threonine 202, and histidine 315.

This sequence belongs to the uroporphyrinogen decarboxylase family. As to quaternary structure, homodimer.

It is found in the cytoplasm. It catalyses the reaction uroporphyrinogen III + 4 H(+) = coproporphyrinogen III + 4 CO2. Its pathway is porphyrin-containing compound metabolism; protoporphyrin-IX biosynthesis; coproporphyrinogen-III from 5-aminolevulinate: step 4/4. Functionally, catalyzes the decarboxylation of four acetate groups of uroporphyrinogen-III to yield coproporphyrinogen-III. This chain is Uroporphyrinogen decarboxylase, found in Geotalea daltonii (strain DSM 22248 / JCM 15807 / FRC-32) (Geobacter daltonii).